The sequence spans 116 residues: Large ribosomal subunit protein bL21c (116 aa).

This sequence belongs to the bacterial ribosomal protein bL21 family. As to quaternary structure, part of the 50S ribosomal subunit.

The protein localises to the plastid. The protein resides in the chloroplast. Functionally, this protein binds to 23S rRNA. This chain is Large ribosomal subunit protein bL21c, found in Marchantia polymorpha (Common liverwort).